A 344-amino-acid polypeptide reads, in one-letter code: Uroporphyrinogen decarboxylase (344 aa).

Substrate-binding positions include 27–31 (RQAGR), F46, D76, Y151, S206, and H319.

The protein belongs to the uroporphyrinogen decarboxylase family. In terms of assembly, homodimer.

It is found in the cytoplasm. It carries out the reaction uroporphyrinogen III + 4 H(+) = coproporphyrinogen III + 4 CO2. It functions in the pathway porphyrin-containing compound metabolism; protoporphyrin-IX biosynthesis; coproporphyrinogen-III from 5-aminolevulinate: step 4/4. In terms of biological role, catalyzes the decarboxylation of four acetate groups of uroporphyrinogen-III to yield coproporphyrinogen-III. In Halalkalibacterium halodurans (strain ATCC BAA-125 / DSM 18197 / FERM 7344 / JCM 9153 / C-125) (Bacillus halodurans), this protein is Uroporphyrinogen decarboxylase.